The following is a 299-amino-acid chain: MTKIKIVVIVGPTAVGKTALGISLAKAFNGEIISGDSQQVYRQLDVGTAKATQEEQAAAVHHLIDIREVTESYSAYEFVQDAQKAISDIVSRGKLPIIVGGTGLYLQSLLEGYHLGGQVDQEAVKAYRQELDQLSDQEVYELLQVKSITIKQLNRRRAIRALELSQFADDLENAETAYEPLIIGLNDDRQVIYDRINQRVDRMLENGLLEEAKWLYEHYPTVQASRGIGYKELFPYFVGEMTLAEASDQLKQNTRRFAKRQLTWFRNRMAVGFTAITAPDYPQVVHDRVRDFLGQKEKS.

11 to 18 (GPTAVGKT) serves as a coordination point for ATP. Residue 13–18 (TAVGKT) coordinates substrate. The interaction with substrate tRNA stretch occupies residues 36-39 (DSQQ).

This sequence belongs to the IPP transferase family. In terms of assembly, monomer. Requires Mg(2+) as cofactor.

It catalyses the reaction adenosine(37) in tRNA + dimethylallyl diphosphate = N(6)-dimethylallyladenosine(37) in tRNA + diphosphate. Catalyzes the transfer of a dimethylallyl group onto the adenine at position 37 in tRNAs that read codons beginning with uridine, leading to the formation of N6-(dimethylallyl)adenosine (i(6)A). The sequence is that of tRNA dimethylallyltransferase from Streptococcus pyogenes serotype M4 (strain MGAS10750).